The following is a 551-amino-acid chain: E-selectin (551 aa).

The first 23 residues, 1 to 23, serve as a signal peptide directing secretion; it reads MVASWLLSTLTFALVLLIKETST. The C-type lectin domain maps to 24–141; it reads WTYHFSAENM…CSKKKLALCY (118 aa). Residues 24 to 495 are Extracellular-facing; sequence WTYHFSAENM…CEEPIASNVP (472 aa). Asn32 and Asn45 each carry an N-linked (GlcNAc...) asparagine glycan. 17 disulfides stabilise this stretch: Cys42–Cys140, Cys113–Cys132, Cys145–Cys156, Cys150–Cys165, Cys167–Cys176, Cys182–Cys226, Cys195–Cys208, Cys212–Cys239, Cys244–Cys288, Cys257–Cys270, Cys274–Cys301, Cys306–Cys351, Cys337–Cys364, Cys369–Cys414, Cys400–Cys427, Cys432–Cys473, and Cys459–Cys486. Positions 103, 105, and 111 each coordinate Ca(2+). A carbohydrate-binding positions include 103 to 111, 115 to 120, and 128 to 130; these read EPNNKQNNE, EIYIKR, and NDE. Residues Asn128 and Asp129 each contribute to the Ca(2+) site. An EGF-like domain is found at 142-177; that stretch reads TAACTEASCSGHGECIETINNYSCKCYPGFSGLKCE. A glycan (N-linked (GlcNAc...) asparagine) is linked at Asn162. 5 Sushi domains span residues 180–241, 242–303, 305–366, 368–429, and 430–488; these read VTCE…TCKV, VECD…TCKA, SCDT…VCEA, KCDP…SCQV, and VQCP…TCEE. 3 N-linked (GlcNAc...) asparagine glycosylation sites follow: Asn194, Asn201, and Asn205. Residue Asn267 is glycosylated (N-linked (GlcNAc...) asparagine). Residues Asn314, Asn321, and Asn334 are each glycosylated (N-linked (GlcNAc...) asparagine). Asn442 and Asn466 each carry an N-linked (GlcNAc...) asparagine glycan. Residues 496–517 form a helical membrane-spanning segment; it reads LAVGLSVSGTSFLTLTSFLLWF. Topologically, residues 518-551 are cytoplasmic; the sequence is LKYFRKKAKKFVPASSRYVGLEAHGNCQVPSHLI.

Belongs to the selectin/LECAM family. In terms of assembly, interacts with SELPLG/PSGL1 and PODXL2 through the sialyl Lewis X epitope. SELPLG sulfation appears not to be required for this interaction.

The protein resides in the cell membrane. Cell-surface glycoprotein having a role in immunoadhesion. Mediates in the adhesion of blood neutrophils in cytokine-activated endothelium through interaction with SELPLG/PSGL1. May have a role in capillary morphogenesis. The chain is E-selectin (SELE) from Oryctolagus cuniculus (Rabbit).